The chain runs to 369 residues: 2-aminoethylphosphonate--pyruvate transaminase (369 aa).

Lys193 carries the N6-(pyridoxal phosphate)lysine modification.

This sequence belongs to the class-V pyridoxal-phosphate-dependent aminotransferase family. PhnW subfamily. As to quaternary structure, homodimer. Pyridoxal 5'-phosphate is required as a cofactor.

It catalyses the reaction (2-aminoethyl)phosphonate + pyruvate = phosphonoacetaldehyde + L-alanine. Its function is as follows. Involved in phosphonate degradation. The protein is 2-aminoethylphosphonate--pyruvate transaminase of Burkholderia pseudomallei (strain K96243).